An 874-amino-acid polypeptide reads, in one-letter code: Pentatricopeptide repeat-containing protein At2g17140 (874 aa).

PPR repeat units follow at residues 111–145 (SVYL…GIAP), 146–180 (QTYT…GCKP), 181–215 (NEFT…GVLP), 216–250 (NKVI…GLVP), 251–285 (DIVT…EYLG), 290–320 (NSIT…IREN), 325–359 (SLQS…GIGP), 360–394 (SIYS…GVCP), 395–429 (DAVT…NCLP), 430–464 (NAYT…GYGL), 465–499 (DTVT…GSAA), 523–557 (DLIT…KLQP), 558–592 (DSVA…GCHK), 593–627 (SLET…GISP), 628–662 (NICT…NIAP), 663–693 (NVFS…AVSI), 697–731 (KEGL…GFEL), 732–766 (GTFL…GYGF), and 767–797 (DPAA…MMEM).

This sequence belongs to the PPR family. P subfamily.

The protein is Pentatricopeptide repeat-containing protein At2g17140 of Arabidopsis thaliana (Mouse-ear cress).